The chain runs to 473 residues: Adenosylhomocysteinase (473 aa).

The substrate site is built by T60, D135, and E197. 198–200 provides a ligand contact to NAD(+); it reads TTT. Residues K227 and D231 each coordinate substrate. NAD(+) contacts are provided by residues N232, 261–266, E284, N319, 340–342, and N385; these read GFGDVG and IGH.

This sequence belongs to the adenosylhomocysteinase family. NAD(+) serves as cofactor.

The protein resides in the cytoplasm. It catalyses the reaction S-adenosyl-L-homocysteine + H2O = L-homocysteine + adenosine. It participates in amino-acid biosynthesis; L-homocysteine biosynthesis; L-homocysteine from S-adenosyl-L-homocysteine: step 1/1. Its function is as follows. May play a key role in the regulation of the intracellular concentration of adenosylhomocysteine. This Bradyrhizobium diazoefficiens (strain JCM 10833 / BCRC 13528 / IAM 13628 / NBRC 14792 / USDA 110) protein is Adenosylhomocysteinase.